A 2411-amino-acid polypeptide reads, in one-letter code: Polyprotein P1234 (2411 aa).

The Alphavirus-like MT domain maps to 30–257 (EAVQTTPNDH…ESRKLLQSWH (228 aa)). The nsP1 membrane-binding stretch occupies residues 242 to 261 (GSTLYTESRKLLQSWHLPST). Residues Cys-415 and Cys-417 are each lipidated (S-palmitoyl cysteine; by host). The (+)RNA virus helicase ATP-binding domain maps to 688-840 (ELVNPPFHEF…HDICSEVFHK (153 aa)). 719–726 (GVPGSGKS) contacts a ribonucleoside 5'-triphosphate. In terms of domain architecture, (+)RNA virus helicase C-terminal spans 841–989 (SISRRCTQDI…IAEWEAEHQG (149 aa)). The 324-residue stretch at 1002–1325 (NTFMNKVNVC…RKANSIFQNT (324 aa)) folds into the Peptidase C9 domain. The tract at residues 1003 to 1022 (TFMNKVNVCWAKTLTPVLET) is nucleolus localization signal. Residue Cys-1011 is the For cysteine protease nsP2 activity of the active site. Positions 1056–1065 (TKMYGFDLDT) match the Nuclear export signal motif. Catalysis depends on His-1081, which acts as the For cysteine protease nsP2 activity. A Nuclear localization signal motif is present at residues 1180-1184 (PNKKI). Residues 1332–1491 (APAYRVKRGD…KIKEAIDHRT (160 aa)) enclose the Macro domain. ADP-D-ribose is bound by residues Asp-1341, Asn-1355, Gly-1363, Gly-1443, Ile-1444, and Tyr-1445. 4 residues coordinate Zn(2+): Cys-1593, Cys-1595, Cys-1618, and Cys-1636. The interval 1681-1720 (DSSIGSLPVGDTRPIPAPRTIFRPVPAPRAPVLRTTPPPK) is disordered. 2 short sequence motifs (FGDF; binding to host G3BP1) span residues 1760–1763 (FGDF) and 1778–1781 (FGDF). The 116-residue stretch at 2165-2280 (DHVLETDIAS…HGIISDKLMA (116 aa)) folds into the RdRp catalytic domain.

Interacts with non-structural protein 3. Interacts with RNA-directed RNA polymerase nsP4. Interacts with protease nsP2. interacts with itself. In terms of assembly, interacts with mRNA-capping enzyme nsP1. Interacts with host DDX1. Interacts with host DDX3. Interacts (via C-terminus) with host G3BP1; this interaction inhibits the formation of host stress granules on viral mRNAs and the nsp3-G3BP1 complexes bind viral RNAs and probably orchestrate the assembly of viral replication complexes. Interacts (via C-terminus) with host G3BP2; this interaction inhibits the formation of host stress granules on viral mRNAs and the nsp3-G3BP2 complexes bind viral RNAs and probably orchestrate the assembly of viral replication complexes. As to quaternary structure, interacts with mRNA-capping enzyme nsP1. Interacts with protease nsP2. interacts with itself. Interacts with RNA-directed RNA polymerase nsP4. Interacts with mRNA-capping enzyme nsP1. Interacts with KPNA1/karyopherin-alpha1; this interaction probably allows the active transport of protease nsP2 into the host nucleus. Requires Mg(2+) as cofactor. Mn(2+) is required as a cofactor. Post-translationally, specific enzymatic cleavages in vivo yield mature proteins. The processing of the polyprotein is temporally regulated. In early stages (1.7 hpi), P1234 is first cleaved in trans through its nsP2 protease activity, releasing P123' and nsP4, which associate to form the early replication complex. At the same time, P1234 is also cut at the nsP1/nsP2 site early in infection but with lower efficiency. After replication of the viral minus-strand RNAs (4 hpi), the polyproteins are cut at the nsP1/nsP2 and nsP2/nsP3 sites very efficiently, preventing accumulation of P123' and P1234 and allowing the formation of the late replication complex. NsP3'/nsP4 site is not cleaved anymore and P34 is produced rather than nsP4. In terms of processing, specific enzymatic cleavages in vivo yield mature proteins. The processing of the polyprotein is temporally regulated. In early stages (1.7 hpi), P123 is cleaved at the nsP1/nsP2 site with low efficiency. After replication of the viral minus-strand RNAs (4 hpi), the polyproteins are cut at the nsP1/nsP2 and nsP2/nsP3 sites very efficiently, preventing accumulation of P123 and allowing the formation of the late replication complex. Specific enzymatic cleavages in vivo yield mature proteins. The processing of the polyprotein is temporally regulated. In early stages (1.7 hpi), P123' is cleaved at the nsP1/nsP2 site with low efficiency. After replication of the viral minus-strand RNAs (4 hpi), the polyproteins are cut at the nsP1/nsP2 and nsP2/nsP3 sites very efficiently, preventing accumulation of P123' and allowing the formation of the late replication complex. Post-translationally, palmitoylated by host palmitoyltransferases ZDHHC2 and ZDHHC19. In terms of processing, phosphorylated by host on serines and threonines. Ubiquitinated; targets the protein for rapid degradation via the ubiquitin system. Nsp4 is present in extremely low quantities due to low frequency of translation through the amber stop-codon and the degradation by the ubiquitin pathway.

The protein resides in the host cytoplasmic vesicle membrane. It localises to the host cell membrane. It is found in the host cell projection. Its subcellular location is the host filopodium. The protein localises to the host nucleus. The protein resides in the host cytoplasm. The catalysed reaction is GTP + S-adenosyl-L-methionine = N(7)-methyl-GTP + S-adenosyl-L-homocysteine. It catalyses the reaction N(7)-methyl-GTP + L-histidyl-[protein] = N(tele)-(N(7)-methylguanosine 5'-phospho)-L-histidyl-[protein] + diphosphate. The enzyme catalyses N(tele)-(N(7)-methylguanosine 5'-phospho)-L-histidyl-[protein] + a 5'-end diphospho-(purine-ribonucleoside) in mRNA + H(+) = a 5'-end (N(7)-methyl 5'-triphosphoguanosine)-(purine-ribonucleoside) in mRNA + L-histidyl-[protein]. It carries out the reaction a 5'-end triphospho-ribonucleoside in mRNA + H2O = a 5'-end diphospho-ribonucleoside in mRNA + phosphate + H(+). The catalysed reaction is a ribonucleoside 5'-triphosphate + H2O = a ribonucleoside 5'-diphosphate + phosphate + H(+). It catalyses the reaction ATP + H2O = ADP + phosphate + H(+). The enzyme catalyses RNA(n) + a ribonucleoside 5'-triphosphate = RNA(n+1) + diphosphate. It carries out the reaction RNA(n) + ATP = RNA(n)-3'-adenine ribonucleotide + diphosphate. The catalysed reaction is 4-O-(ADP-D-ribosyl)-L-aspartyl-[protein] + H2O = L-aspartyl-[protein] + ADP-D-ribose + H(+). It catalyses the reaction 5-O-(ADP-D-ribosyl)-L-glutamyl-[protein] + H2O = L-glutamyl-[protein] + ADP-D-ribose + H(+). The enzyme catalyses ADP-alpha-D-ribose 1''-phosphate + H2O = ADP-D-ribose + phosphate. In terms of biological role, inactive precursor of the viral replicase, which is activated by cleavages carried out by the viral protease nsP2. The early replication complex formed by the polyprotein P123 and nsP4 synthesizes minus-strand RNAs. As soon P123 is cleaved into mature proteins, the plus-strand RNAs synthesis begins. Its function is as follows. The early replication complex formed by the polyprotein P123' and nsP4 synthesizes minus-strand RNAs. Polyprotein P123' is a short-lived polyprotein that accumulates during early stage of infection. As soon P123' is cleaved into mature proteins, the plus-strand RNAs synthesis begins. Functionally, cytoplasmic capping enzyme that catalyzes two virus-specific reactions: methyltransferase and nsP1 guanylyltransferase. mRNA-capping is necessary since all viral RNAs are synthesized in the cytoplasm, and host capping enzymes are restricted to the nucleus. The enzymatic reaction involves a covalent link between 7-methyl-GMP and nsP1, whereas eukaryotic capping enzymes form a covalent complex only with GMP. nsP1 capping consists in the following reactions: GTP is first methylated into 7-methyl-GMP and then is covalently linked to nsP1 to form the m7GMp-nsP1 complex from which 7-methyl-GMP complex is transferred to the mRNA to create the cap structure. NsP1 is needed for the initiation of the minus-strand RNAs synthesis. Probably serves as a membrane anchor for the replication complex composed of nsP1-nsP4. Palmitoylated nsP1 is remodeling host cell cytoskeleton, and induces filopodium-like structure formation at the surface of the host cell. In terms of biological role, multifunctional protein whose N-terminus is part of the RNA polymerase complex and displays NTPase, RNA triphosphatase and helicase activities. NTPase and RNA triphosphatase are involved in viral RNA capping and helicase keeps a check on the dsRNA replication intermediates. The C-terminus harbors a protease that specifically cleaves the polyproteins and releases the mature proteins. Required for the shutoff of minus-strand RNAs synthesis. Specifically inhibits the host IFN response by promoting the nuclear export of host STAT1. Also inhibits host transcription by inducing rapid proteasome-dependent degradation of POLR2A, a catalytic subunit of the RNAPII complex. The resulting inhibition of cellular protein synthesis serves to ensure maximal viral gene expression and to evade host immune response. Seems to be essential for minus-strand RNAs and subgenomic 26S mRNAs synthesis. Displays mono-ADP-ribosylhydrolase activity. ADP-ribosylation is a post-translational modification that controls various processes of the host cell and the virus probably needs to revert it for optimal viral replication. Binds proteins of FXR family and sequesters them into the viral RNA replication complexes thereby inhibiting the formation of host stress granules on viral mRNAs. The nsp3-FXR complexes bind viral RNAs and probably orchestrate the assembly of viral replication complexes, thanks to the ability of FXR family members to self-assemble and bind DNA. Its function is as follows. Seems to be essential for minus-strand RNAs and subgenomic 26S mRNAs synthesis. Displays mono-ADP-ribosylhydrolase activity. ADP-ribosylation is a post-translantional modification that controls various processes of the host cell and the virus probably needs to revert it for optimal viral replication. Binds proteins of G3BP family and sequesters them into the viral RNA replication complexes thereby inhibiting the formation of host stress granules on viral mRNAs. The nsp3'-G3BP complexes bind viral RNAs and probably orchestrate the assembly of viral replication complexes, thanks to the ability of G3BP family members to self-assemble and bind DNA. Functionally, RNA dependent RNA polymerase. Replicates genomic and antigenomic RNA by recognizing replications specific signals. The early replication complex formed by the polyprotein P123 and nsP4 synthesizes minus-strand RNAs. The late replication complex composed of fully processed nsP1-nsP4 is responsible for the production of genomic and subgenomic plus-strand RNAs. The core catalytic domain of nsP4 also possesses terminal adenylyltransferase (TATase) activity that is probably involved in maintenance and repair of the poly(A) tail, an element required for replication of the viral genome. This is Polyprotein P1234 from Barmah forest virus (BFV).